The primary structure comprises 621 residues: 2-hydroxyacyl-CoA lyase 2 (621 aa).

A helical transmembrane segment spans residues 7–29 (LGCSLGAALGGVIFASYKLGLLY). A thiamine diphosphate-binding site is contributed by Glu87. The segment at 459 to 539 (DFVGSAAYIM…VIALVGNDAC (81 aa)) is thiamine pyrophosphate binding. Mg(2+) contacts are provided by Asp510 and Asn536.

The protein belongs to the TPP enzyme family. The cofactor is Mg(2+). Requires thiamine diphosphate as cofactor.

The protein resides in the endoplasmic reticulum membrane. The enzyme catalyses 2-hydroxyoctadecanoyl-CoA = heptadecanal + formyl-CoA. The catalysed reaction is (2R)-hydroxyhexadecanoyl-CoA = pentadecanal + formyl-CoA. Functionally, endoplasmic reticulum 2-OH acyl-CoA lyase involved in the cleavage (C1 removal) reaction in the fatty acid alpha-oxydation in a thiamine pyrophosphate (TPP)-dependent manner. This Danio rerio (Zebrafish) protein is 2-hydroxyacyl-CoA lyase 2 (ilvbl).